We begin with the raw amino-acid sequence, 1447 residues long: Baculoviral IAP repeat-containing protein 1b (1447 aa).

3 BIR repeats span residues 60 to 127 (EAKR…CEFL), 159 to 227 (EEAR…CEFL), and 278 to 345 (EELR…CVFL). Zn(2+) contacts are provided by cysteine 315, cysteine 318, histidine 335, and cysteine 342. The NACHT domain maps to 508–802 (SVMCVEGEAG…EFLAAVRLTE (295 aa)). Position 520 (lysine 520) interacts with ATP.

Component of the NLRC4 inflammasome, at least composed of NLRC4, caspase-1 (CASP1) and some NAIP protein. Interacts with S.typhimurium (Salmonella) PrgJ and B.thailandensis BsaK.

In terms of biological role, sensor component of the NLRC4 inflammasome that specifically recognizes and binds type III secretion system (T3SS) rod proteins such as S.typhimurium (Salmonella) PrgJ and B.thailandensis BsaK from pathogenic bacteria. Association of pathogenic bacteria proteins drives in turn drive assembly and activation of the NLRC4 inflammasome, promoting caspase-1 activation, cytokine production and macrophage pyroptosis. The NLRC4 inflammasome is activated as part of the innate immune response to a range of intracellular bacteria. The NLRC4 inflammasome senses Gram-negative bacteria such as L.pneumophila and P.aeruginosa, enteric pathogens S.typhimurium (Salmonella) and S.flexneri. Prevents motor-neuron apoptosis induced by a variety of signals. In Mus musculus (Mouse), this protein is Baculoviral IAP repeat-containing protein 1b (Naip2).